We begin with the raw amino-acid sequence, 609 residues long: Ataxin-10 homolog (609 aa).

Disordered stretches follow at residues 265 to 293 (KSTT…TTTG), 405 to 426 (KQQE…SKDS), and 461 to 490 (SDTN…KGFN). Low complexity predominate over residues 266 to 292 (STTESTTESTTTESTDSTTDSTTTTTT). Over residues 466–479 (SSSSSSSSSSSTTT) the composition is skewed to low complexity. The span at 480 to 490 (DGETVTSKGFN) shows a compositional bias: polar residues.

This sequence belongs to the ATXN10 family.

Functionally, may play a role in the regulation of cytokinesis. The chain is Ataxin-10 homolog (atxn10) from Dictyostelium discoideum (Social amoeba).